Consider the following 1088-residue polypeptide: PAN2-PAN3 deadenylation complex catalytic subunit pan2 (1088 aa).

WD repeat units follow at residues 16–56, 136–175, 178–224, and 270–309; these read VSTC…YTQF, HKDK…PVNK, AHTG…SLVP, and PLTS…SFSD. The tract at residues 309 to 443 is linker; it reads DLKLPIQLPN…EDTISGPDSI (135 aa). Positions 443 to 814 constitute a USP domain; the sequence is IPKFYQRPVI…IPIIVYYEKL (372 aa). In terms of domain architecture, Exonuclease spans 860 to 1033; it reads VGIDSEFVAL…EDALTALKLY (174 aa). A divalent metal cation contacts are provided by Asp863, Glu865, Asp972, and Asp1025.

Belongs to the peptidase C19 family. PAN2 subfamily. In terms of assembly, forms a heterotrimer with an asymmetric homodimer of the regulatory subunit ppk26/pan3 to form the poly(A)-nuclease (PAN) deadenylation complex. Requires a divalent metal cation as cofactor.

The protein localises to the cytoplasm. The enzyme catalyses Exonucleolytic cleavage of poly(A) to 5'-AMP.. Its activity is regulated as follows. Positively regulated by the regulatory subunit ppk26/pan3. In terms of biological role, catalytic subunit of the poly(A)-nuclease (PAN) deadenylation complex, one of two cytoplasmic mRNA deadenylases involved in mRNA turnover. PAN specifically shortens poly(A) tails of RNA and the activity is stimulated by poly(A)-binding protein pab1. PAN deadenylation is followed by rapid degradation of the shortened mRNA tails by the CCR4-NOT complex. Deadenylated mRNAs are then degraded by two alternative mechanisms, namely exosome-mediated 3'-5' exonucleolytic degradation, or deadenylation-dependent mRNA decaping and subsequent 5'-3' exonucleolytic degradation by xrn1. May also be involved in post-transcriptional maturation of mRNA poly(A) tails. The polypeptide is PAN2-PAN3 deadenylation complex catalytic subunit pan2 (Schizosaccharomyces pombe (strain 972 / ATCC 24843) (Fission yeast)).